We begin with the raw amino-acid sequence, 457 residues long: Probable cytosolic Fe-S cluster assembly factor oxy-4 (457 aa).

Residue C25 participates in [4Fe-4S] cluster binding. Residues 38-59 (KEESQVNIRTKKPKDKESSKTE) form a disordered region. Residues C71, C74, C77, C176, C232, C380, and C384 each contribute to the [4Fe-4S] cluster site.

Belongs to the NARF family.

Component of the cytosolic iron-sulfur (Fe/S) protein assembly machinery. Required for maturation of extramitochondrial Fe/S proteins. The protein is Probable cytosolic Fe-S cluster assembly factor oxy-4 (oxy-4) of Caenorhabditis elegans.